The chain runs to 279 residues: Cyanocobalamin reductase / alkylcobalamin dealkylase (279 aa).

Residues Asp-104, 115–118 (ILAQ), 129–131 (YYQ), Cys-149, and Ile-160 contribute to the substrate site. Residues 239–279 (PSEHPSTTSELPLSLLTKPQNSRRARSWLSPSVSPPVSPGP) are disordered. Low complexity predominate over residues 243–257 (PSTTSELPLSLLTKP). Ser-247, Ser-272, and Ser-276 each carry phosphoserine.

This sequence belongs to the MMACHC family. Monomer in the absence of bound substrate. Homodimer; dimerization is triggered by binding to FMN or adenosylcobalamin. Interacts with LMBRD1 and ABCD4; the interaction ensures the transport of cobalamin from the lysosome to the cytoplasm. Forms a multiprotein complex with MMADHC, MTR and MTRR; the interaction with MTR could modulate MMACHC-dependent processing of cobalamin. Heterodimer with MMADHC; the interaction might play a role in the regulation of the balance between AdoCbl and MeCbl synthesis. It depends on FAD as a cofactor. The cofactor is FMN. Detected in liver and kidney (at protein level). Detected in embryos.

The protein resides in the cytoplasm. Its subcellular location is the cytosol. The enzyme catalyses 2 cob(II)alamin-[cyanocobalamin reductase] + 2 hydrogen cyanide + NADP(+) = 2 cyanocob(III)alamin + 2 apo-[cyanocobalamin reductase] + NADPH + H(+). It catalyses the reaction apo-[alkylcobalamin reductase] + an R-cob(III)alamin + glutathione = cob(I)alamin-[alkylcobalamin reductase] + an S-substituted glutathione + H(+). The catalysed reaction is apo-[alkylcobalamin reductase] + methylcob(III)alamin + glutathione = S-methyl glutathione + cob(I)alamin-[alkylcobalamin reductase] + H(+). It carries out the reaction apo-[alkylcobalamin reductase] + adenosylcob(III)alamin + glutathione = S-adenosylglutathione + cob(I)alamin-[alkylcobalamin reductase] + H(+). Functionally, cobalamin (vitamin B12) cytosolic chaperone that catalyzes the reductive decyanation of cyanocob(III)alamin (cyanocobalamin, CNCbl) to yield cob(II)alamin and cyanide, using FAD or FMN as cofactors and NADPH as cosubstrate. Cyanocobalamin constitutes the inactive form of vitamin B12 introduced from the diet, and is converted into the active cofactors methylcobalamin (MeCbl) involved in methionine biosynthesis, and 5'-deoxyadenosylcobalamin (AdoCbl) involved in the TCA cycle. Forms a complex with the lysosomal transporter ABCD4 and its chaperone LMBRD1, to transport cobalamin across the lysosomal membrane into the cytosol. The processing of cobalamin in the cytosol occurs in a multiprotein complex composed of at least MMACHC, MMADHC, MTRR (methionine synthase reductase) and MTR (methionine synthase) which may contribute to shuttle safely and efficiently cobalamin towards MTR in order to produce methionine. Also acts as a glutathione transferase by catalyzing the dealkylation of the alkylcob(III)alamins MeCbl and AdoCbl, using the thiolate of glutathione for nucleophilic displacement to generate cob(I)alamin and the corresponding glutathione thioether. The conversion of incoming MeCbl or AdoCbl into a common intermediate cob(I)alamin is necessary to meet the cellular needs for both cofactors. Cysteine and homocysteine cannot substitute for glutathione in this reaction. The polypeptide is Cyanocobalamin reductase / alkylcobalamin dealkylase (Mus musculus (Mouse)).